The chain runs to 203 residues: Large ribosomal subunit protein bL25 (203 aa).

This sequence belongs to the bacterial ribosomal protein bL25 family. CTC subfamily. As to quaternary structure, part of the 50S ribosomal subunit; part of the 5S rRNA/L5/L18/L25 subcomplex. Contacts the 5S rRNA. Binds to the 5S rRNA independently of L5 and L18.

This is one of the proteins that binds to the 5S RNA in the ribosome where it forms part of the central protuberance. The sequence is that of Large ribosomal subunit protein bL25 from Pseudomonas savastanoi pv. phaseolicola (strain 1448A / Race 6) (Pseudomonas syringae pv. phaseolicola (strain 1448A / Race 6)).